Consider the following 239-residue polypeptide: Probable transcriptional regulatory protein Sca_0317 (239 aa).

Belongs to the TACO1 family. YeeN subfamily.

It localises to the cytoplasm. The sequence is that of Probable transcriptional regulatory protein Sca_0317 from Staphylococcus carnosus (strain TM300).